The following is a 259-amino-acid chain: Small ribosomal subunit protein eS1 (259 aa).

Belongs to the eukaryotic ribosomal protein eS1 family. Component of the small ribosomal subunit. Mature ribosomes consist of a small (40S) and a large (60S) subunit. The 40S subunit contains about 33 different proteins and 1 molecule of RNA (18S). The 60S subunit contains about 49 different proteins and 3 molecules of RNA (25S, 5.8S and 5S).

It is found in the cytoplasm. The sequence is that of Small ribosomal subunit protein eS1 from Monosiga brevicollis (Choanoflagellate).